Here is a 236-residue protein sequence, read N- to C-terminus: Chorionic somatomammotropin hormone (236 aa).

The signal sequence occupies residues Met-1–Gly-36. Intrachain disulfides connect Cys-44–Cys-51, Cys-97–Cys-212, and Cys-229–Cys-234.

It belongs to the somatotropin/prolactin family.

The protein resides in the secreted. This Ovis aries (Sheep) protein is Chorionic somatomammotropin hormone (CSH).